We begin with the raw amino-acid sequence, 351 residues long: Large ribosomal subunit protein uL3 (351 aa).

Disordered regions lie at residues 1 to 31 and 246 to 271; these read MGHRKLASPRRGSAGLRPRKRSSELLPTPRT and KGSRKIGTRGPSLGTPSYTPQPGQLG.

This sequence belongs to the universal ribosomal protein uL3 family. Part of the 50S ribosomal subunit. Forms a cluster with proteins L14 and L24e.

In terms of biological role, one of the primary rRNA binding proteins, it binds directly near the 3'-end of the 23S rRNA, where it nucleates assembly of the 50S subunit. This is Large ribosomal subunit protein uL3 from Saccharolobus islandicus (strain M.14.25 / Kamchatka #1) (Sulfolobus islandicus).